Consider the following 544-residue polypeptide: Probable protein kinase UbiB (544 aa).

The region spanning 123-501 (DFDIEPLASA…KRQQATGKFL (379 aa)) is the Protein kinase domain. ATP is bound by residues 129–137 (LASASIAQV) and Lys152. Residue Asp287 is the Proton acceptor of the active site. The chain crosses the membrane as a helical span at residues 500 to 520 (FLFGVGATLVVCSAILVSSPY).

Belongs to the ABC1 family. UbiB subfamily.

Its subcellular location is the cell inner membrane. It participates in cofactor biosynthesis; ubiquinone biosynthesis [regulation]. Its function is as follows. Is probably a protein kinase regulator of UbiI activity which is involved in aerobic coenzyme Q (ubiquinone) biosynthesis. In Vibrio atlanticus (strain LGP32) (Vibrio splendidus (strain Mel32)), this protein is Probable protein kinase UbiB.